The following is a 266-amino-acid chain: Ubiquinone biosynthesis protein COQ4 homolog, mitochondrial (266 aa).

Positions 169, 170, 173, and 185 each coordinate Zn(2+).

It belongs to the COQ4 family. Component of a multi-subunit COQ enzyme complex. The cofactor is Zn(2+).

It localises to the mitochondrion inner membrane. The enzyme catalyses a 4-hydroxy-3-methoxy-5-(all-trans-polyprenyl)benzoate + H(+) = a 2-methoxy-6-(all-trans-polyprenyl)phenol + CO2. It functions in the pathway cofactor biosynthesis; ubiquinone biosynthesis. In terms of biological role, lyase that catalyzes the C1-decarboxylation of 4-hydroxy-3-methoxy-5-(all-trans-polyprenyl)benzoic acid into 2-methoxy-6-(all-trans-polyprenyl)phenol during ubiquinone biosynthesis. The polypeptide is Ubiquinone biosynthesis protein COQ4 homolog, mitochondrial (Drosophila ananassae (Fruit fly)).